Reading from the N-terminus, the 201-residue chain is Recombination protein RecR (201 aa).

The segment at 57-72 (CKSCRTFTEEDECAIC) adopts a C4-type zinc-finger fold. Residues 81 to 176 (GQLCVVEMPA…KVTRIAHGIP (96 aa)) form the Toprim domain.

It belongs to the RecR family.

Functionally, may play a role in DNA repair. It seems to be involved in an RecBC-independent recombinational process of DNA repair. It may act with RecF and RecO. The protein is Recombination protein RecR of Glaesserella parasuis serovar 5 (strain SH0165) (Haemophilus parasuis).